We begin with the raw amino-acid sequence, 30 residues long: Cytochrome b6/f complex 12.6 kDa peptide (30 aa).

A disordered region spans residues 1 to 30 (SGSGVRSAKKGGKAQGGQAGVGYKGSTEPG). Over residues 13 to 23 (KAQGGQAGVGY) the composition is skewed to gly residues.

The protein resides in the plastid. It is found in the chloroplast. Its function is as follows. May be a component of the cytochrome b6/f complex which is part of the photosynthetic respiratory chain. This Euglena gracilis protein is Cytochrome b6/f complex 12.6 kDa peptide.